A 160-amino-acid chain; its full sequence is Transcriptional repressor NrdR (160 aa).

Polar residues predominate over residues 1–11 (MRCPNCNSLDT). Positions 1 to 20 (MRCPNCNSLDTQVKDSRPTE) are disordered. Residues 3–34 (CPNCNSLDTQVKDSRPTEDSSVIRRRRVCIAC) fold into a zinc finger. The ATP-cone domain occupies 49–139 (LIVIKRNGRR…VYRNFREAKD (91 aa)).

This sequence belongs to the NrdR family. Zn(2+) serves as cofactor.

Its function is as follows. Negatively regulates transcription of bacterial ribonucleotide reductase nrd genes and operons by binding to NrdR-boxes. In Rhodopseudomonas palustris (strain ATCC BAA-98 / CGA009), this protein is Transcriptional repressor NrdR.